We begin with the raw amino-acid sequence, 351 residues long: Protein-glutamate methylesterase/protein-glutamine glutaminase 2 (351 aa).

A Response regulatory domain is found at R5–L122. Residue D56 is modified to 4-aspartylphosphate. In terms of domain architecture, CheB-type methylesterase spans L154–L341. Residues S166, H192, and D289 contribute to the active site.

The protein belongs to the CheB family. Phosphorylated by CheA. Phosphorylation of the N-terminal regulatory domain activates the methylesterase activity.

It is found in the cytoplasm. It catalyses the reaction [protein]-L-glutamate 5-O-methyl ester + H2O = L-glutamyl-[protein] + methanol + H(+). The catalysed reaction is L-glutaminyl-[protein] + H2O = L-glutamyl-[protein] + NH4(+). Its function is as follows. Involved in chemotaxis. Part of a chemotaxis signal transduction system that modulates chemotaxis in response to various stimuli. Catalyzes the demethylation of specific methylglutamate residues introduced into the chemoreceptors (methyl-accepting chemotaxis proteins or MCP) by CheR. Also mediates the irreversible deamidation of specific glutamine residues to glutamic acid. This Bordetella avium (strain 197N) protein is Protein-glutamate methylesterase/protein-glutamine glutaminase 2.